The chain runs to 514 residues: MFQFHLEVLLPYLLPLLLLILPTTIFFLTKPNNKVSSTSTNNNIITLPKSYPLIGSYLSFRKNLHRRIQWLSDIVQISPSATFQLDGTLGKRQIITGNPSTVQHILKNQFSNYQKGTTFTNTLSDFLGTGIFNTNGPNWKFQRQVASHEFNTKSIRNFVEHIVDTELTNRLIPILTSSTQTNNILDFQDILQRFTFDNICNIAFGYDPEYLTPSTNRSKFAEAYEDATEISSKRFRLPLPIIWKIKKYFNIGSEKRLKEAVTEVRSFAKKLVREKKRELEEKSSLETEDMLSRFLSSGHSDEDFVADIVISFILAGKDTTSAALTWFFWLLWKNPRVEEEIVNELSKKSELMVYDEVKEMVYTHAALSESMRLYPPVPMDSKEAVNDDVLPDGWVVKKGTIVTYHVYAMGRMKSLWGDDWAEFRPERWLEKDEVNGKWVFVGRDSYSYPVFQAGPRVCLGKEMAFMQMKRIVAGIVGKFKVVPEAHLAQEPGFISFLSSQMEGGFPVTIQKRDS.

Residues 7 to 29 (EVLLPYLLPLLLLILPTTIFFLT) traverse the membrane as a helical segment. Position 458 (C458) interacts with heme.

This sequence belongs to the cytochrome P450 family. The cofactor is heme.

It localises to the endoplasmic reticulum membrane. Functionally, catalyzes the omega-hydroxylation of various fatty acids (FA) from 10 to 18 carbon atoms. The substrate specificity is higher for laurate &gt; palmitate &gt; myristate &gt; linolenate &gt; linoleate &gt; oleate &gt; caprate. May play a minor role in cutin synthesis and could be involved in plant defense. The sequence is that of Cytochrome P450 94A1 (CYP94A1) from Vicia sativa (Spring vetch).